The sequence spans 257 residues: Melatonin receptor type 1A (257 aa).

Residues 5–22 (LASIVNDGWSLSSLHCQL) are Extracellular-facing. An intrachain disulfide couples cysteine 20 to cysteine 97. Residues 23–43 (SGFLMGLSVIGSVFNITGIAI) traverse the membrane as a helical segment. Topologically, residues 44–64 (NRYCCICHSLRYNKLYSSTNS) are cytoplasmic. The chain crosses the membrane as a helical span at residues 65 to 85 (LCYVFLIWMLTLVAIVPNLCV). Topologically, residues 86–107 (GTLQYDPRIYSCTFTQSVSSAY) are extracellular. The chain crosses the membrane as a helical span at residues 108 to 128 (TIAVVVFHFIVPMLVVIFCYL). Topologically, residues 129 to 160 (RIWALVLQVRWRVKPDNKPKLKPQDFRNFVTM) are cytoplasmic. A helical transmembrane segment spans residues 161–181 (FVVFVLFAICWAPLNFIGLVV). At 182–194 (ASEPASMAPRIPE) the chain is on the extracellular side. Residues 195 to 215 (WLFVASYYMGYFNSCLNAIIY) traverse the membrane as a helical segment. The Cytoplasmic portion of the chain corresponds to 216–257 (GLLNQNFRQEYRKIIVSLCTTKMFFVDSSNHVAHRIKRKPSP).

The protein belongs to the G-protein coupled receptor 1 family.

The protein resides in the cell membrane. Its function is as follows. High affinity receptor for melatonin. Likely to mediate the reproductive and circadian actions of melatonin. The activity of this receptor is mediated by pertussis toxin sensitive G proteins that inhibit adenylate cyclase activity. Possibly involved in sleep induction, by melatonin activation of the potassium channel KCNMA1/BK and the dissociation of G-beta and G-gamma subunits, thereby decreasing synaptic transmission. This Bos taurus (Bovine) protein is Melatonin receptor type 1A (MTNR1A).